A 337-amino-acid chain; its full sequence is tRNA N6-adenosine threonylcarbamoyltransferase (337 aa).

Positions 111 and 115 each coordinate Fe cation. Substrate contacts are provided by residues Leu-134 to Gly-138, Asp-167, Gly-180, and Asn-272. Position 300 (Asp-300) interacts with Fe cation.

This sequence belongs to the KAE1 / TsaD family. It depends on Fe(2+) as a cofactor.

The protein resides in the cytoplasm. The enzyme catalyses L-threonylcarbamoyladenylate + adenosine(37) in tRNA = N(6)-L-threonylcarbamoyladenosine(37) in tRNA + AMP + H(+). In terms of biological role, required for the formation of a threonylcarbamoyl group on adenosine at position 37 (t(6)A37) in tRNAs that read codons beginning with adenine. Is involved in the transfer of the threonylcarbamoyl moiety of threonylcarbamoyl-AMP (TC-AMP) to the N6 group of A37, together with TsaE and TsaB. TsaD likely plays a direct catalytic role in this reaction. The polypeptide is tRNA N6-adenosine threonylcarbamoyltransferase (Salmonella agona (strain SL483)).